Consider the following 372-residue polypeptide: 4-hydroxy-3-methylbut-2-en-1-yl diphosphate synthase (flavodoxin) (372 aa).

The [4Fe-4S] cluster site is built by Cys270, Cys273, Cys305, and Glu312.

It belongs to the IspG family. It depends on [4Fe-4S] cluster as a cofactor.

The enzyme catalyses (2E)-4-hydroxy-3-methylbut-2-enyl diphosphate + oxidized [flavodoxin] + H2O + 2 H(+) = 2-C-methyl-D-erythritol 2,4-cyclic diphosphate + reduced [flavodoxin]. Its pathway is isoprenoid biosynthesis; isopentenyl diphosphate biosynthesis via DXP pathway; isopentenyl diphosphate from 1-deoxy-D-xylulose 5-phosphate: step 5/6. Its function is as follows. Converts 2C-methyl-D-erythritol 2,4-cyclodiphosphate (ME-2,4cPP) into 1-hydroxy-2-methyl-2-(E)-butenyl 4-diphosphate. In Citrobacter koseri (strain ATCC BAA-895 / CDC 4225-83 / SGSC4696), this protein is 4-hydroxy-3-methylbut-2-en-1-yl diphosphate synthase (flavodoxin).